We begin with the raw amino-acid sequence, 506 residues long: Anaerobic nitric oxide reductase transcription regulator NorR (506 aa).

At Asp57 the chain carries 4-aspartylphosphate. A Sigma-54 factor interaction domain is found at 187–416 (MIGLSPAMTQ…LEHAIHRAVV (230 aa)). Residues 215–222 (GETGTGKE) and 278–287 (ADNGTLFLDE) contribute to the ATP site. The segment at residues 481–500 (WAASARALETDVANLHRLAK) is a DNA-binding region (H-T-H motif).

It functions in the pathway nitrogen metabolism; nitric oxide reduction. Functionally, required for the expression of anaerobic nitric oxide (NO) reductase, acts as a transcriptional activator for at least the norVW operon. Activation also requires sigma-54. The sequence is that of Anaerobic nitric oxide reductase transcription regulator NorR from Salmonella choleraesuis (strain SC-B67).